The primary structure comprises 98 residues: Large ribosomal subunit protein bL28 (98 aa).

The protein belongs to the bacterial ribosomal protein bL28 family.

The polypeptide is Large ribosomal subunit protein bL28 (Beijerinckia indica subsp. indica (strain ATCC 9039 / DSM 1715 / NCIMB 8712)).